Reading from the N-terminus, the 426-residue chain is Serine hydroxymethyltransferase (426 aa).

(6S)-5,6,7,8-tetrahydrofolate contacts are provided by residues leucine 113 and glycine 117 to leucine 119. Lysine 222 carries the N6-(pyridoxal phosphate)lysine modification. Serine 363 to phenylalanine 365 provides a ligand contact to (6S)-5,6,7,8-tetrahydrofolate.

The protein belongs to the SHMT family. As to quaternary structure, homodimer. The cofactor is pyridoxal 5'-phosphate.

Its subcellular location is the cytoplasm. It carries out the reaction (6R)-5,10-methylene-5,6,7,8-tetrahydrofolate + glycine + H2O = (6S)-5,6,7,8-tetrahydrofolate + L-serine. It functions in the pathway one-carbon metabolism; tetrahydrofolate interconversion. Its pathway is amino-acid biosynthesis; glycine biosynthesis; glycine from L-serine: step 1/1. In terms of biological role, catalyzes the reversible interconversion of serine and glycine with tetrahydrofolate (THF) serving as the one-carbon carrier. This reaction serves as the major source of one-carbon groups required for the biosynthesis of purines, thymidylate, methionine, and other important biomolecules. Also exhibits THF-independent aldolase activity toward beta-hydroxyamino acids, producing glycine and aldehydes, via a retro-aldol mechanism. The polypeptide is Serine hydroxymethyltransferase (Bacteroides fragilis (strain ATCC 25285 / DSM 2151 / CCUG 4856 / JCM 11019 / LMG 10263 / NCTC 9343 / Onslow / VPI 2553 / EN-2)).